Here is a 138-residue protein sequence, read N- to C-terminus: Ribosome-binding factor A (138 aa).

The disordered stretch occupies residues 117–138; it reads ERQNKPAASTEKPPVGSLDADL.

This sequence belongs to the RbfA family. Monomer. Binds 30S ribosomal subunits, but not 50S ribosomal subunits or 70S ribosomes.

It localises to the cytoplasm. Its function is as follows. One of several proteins that assist in the late maturation steps of the functional core of the 30S ribosomal subunit. Associates with free 30S ribosomal subunits (but not with 30S subunits that are part of 70S ribosomes or polysomes). Required for efficient processing of 16S rRNA. May interact with the 5'-terminal helix region of 16S rRNA. The chain is Ribosome-binding factor A from Acaryochloris marina (strain MBIC 11017).